The sequence spans 405 residues: Cystathionine gamma-lyase (405 aa).

Substrate-binding residues include Arg-62, Tyr-114, and Arg-119. Residue Lys-212 is modified to N6-(pyridoxal phosphate)lysine. Glu-339 is a substrate binding site.

Belongs to the trans-sulfuration enzymes family. Homotetramer. Interacts with CALM in a calcium-dependent manner. Pyridoxal 5'-phosphate is required as a cofactor.

Its subcellular location is the cytoplasm. The enzyme catalyses L,L-cystathionine + H2O = 2-oxobutanoate + L-cysteine + NH4(+). It catalyses the reaction L-cysteine + H2O = hydrogen sulfide + pyruvate + NH4(+) + H(+). The catalysed reaction is L-homocysteine + H2O = 2-oxobutanoate + hydrogen sulfide + NH4(+) + H(+). It carries out the reaction L-homoserine = 2-oxobutanoate + NH4(+). The enzyme catalyses L-selenocystathionine + H2O = L-selenocysteine + 2-oxobutanoate + NH4(+). It functions in the pathway amino-acid biosynthesis; L-cysteine biosynthesis; L-cysteine from L-homocysteine and L-serine: step 2/2. Its function is as follows. Catalyzes the last step in the trans-sulfuration pathway from L-methionine to L-cysteine in a pyridoxal-5'-phosphate (PLP)-dependent manner, which consists on cleaving the L,L-cystathionine molecule into L-cysteine, ammonia and 2-oxobutanoate. Part of the L-cysteine derived from the trans-sulfuration pathway is utilized for biosynthesis of the ubiquitous antioxidant glutathione. Besides its role in the conversion of L-cystathionine into L-cysteine, it utilizes L-cysteine and L-homocysteine as substrates (at much lower rates than L,L-cystathionine) to produce hydrogen sulfide (H2S). In vitro, it converts two L-cysteine molecules into lanthionine and H2S, and two L-homocysteine molecules to homolanthionine and H2S, which can be particularly relevant under conditions of severe hyperhomocysteinemia. Lanthionine and homolanthionine are structural homologs of L,L-cystathionine that differ by the absence or presence of an extra methylene group, respectively. Acts as a cysteine-protein sulfhydrase by mediating sulfhydration of target proteins: sulfhydration consists of converting -SH groups into -SSH on specific cysteine residues of target proteins such as GAPDH, PTPN1 and NF-kappa-B subunit RELA, thereby regulating their function. By generating the gasotransmitter H2S, it participates in a number of physiological processes such as vasodilation, bone protection, and inflammation. Plays an essential role in myogenesis by contributing to the biogenesis of H2S in skeletal muscle tissue. Can also accept homoserine as substrate. Catalyzes the elimination of selenocystathionine (which can be derived from the diet) to yield selenocysteine, ammonia and 2-oxobutanoate. This Macaca fascicularis (Crab-eating macaque) protein is Cystathionine gamma-lyase (CTH).